A 138-amino-acid polypeptide reads, in one-letter code: High mobility group B protein 4 (138 aa).

Disordered stretches follow at residues 1 to 41 and 105 to 138; these read MKGG…PPSA and LKLASGTNREEDDSDKSKSEVDEAVSEEEAEDDD. Residues 18-29 are compositionally biased toward basic residues; the sequence is KTRGRKAGKKTK. The segment at residues 35–104 is a DNA-binding region (HMG box); sequence PKRPPSAFFV…EYIKNVQQYN (70 aa). Phosphoserine is present on residues Ser-123 and Ser-130. Over residues 126-138 the composition is skewed to acidic residues; the sequence is DEAVSEEEAEDDD.

It belongs to the HMGB family. In terms of tissue distribution, mostly expressed roots and flowers, and, to a lower extent, in stems and leaves.

The protein resides in the nucleus. It is found in the cytoplasm. Its subcellular location is the cytosol. In terms of biological role, binds preferentially double-stranded DNA. The chain is High mobility group B protein 4 (HMGB4) from Arabidopsis thaliana (Mouse-ear cress).